The primary structure comprises 327 residues: uncharacterized protein (327 aa).

Residues 13 to 33 (IICIISIIVLLLIIISLYPHK) form a helical membrane-spanning segment.

It localises to the membrane. This is an uncharacterized protein from Caenorhabditis elegans.